Consider the following 478-residue polypeptide: Cysteine--tRNA ligase (478 aa).

Cys-27 contributes to the Zn(2+) binding site. A 'HIGH' region motif is present at residues 29-39 (PTTYNFIHLGN). Zn(2+) is bound by residues Cys-207, His-232, and Glu-236. The short motif at 264–268 (KMSKS) is the 'KMSKS' region element. ATP is bound at residue Lys-267.

The protein belongs to the class-I aminoacyl-tRNA synthetase family. Monomer. Zn(2+) is required as a cofactor.

The protein resides in the cytoplasm. The enzyme catalyses tRNA(Cys) + L-cysteine + ATP = L-cysteinyl-tRNA(Cys) + AMP + diphosphate. In Desulforudis audaxviator (strain MP104C), this protein is Cysteine--tRNA ligase.